The sequence spans 240 residues: MKGTISHRESFLTHIRQQLGKDSSSSASIQRPAWKHQVQWETNGLLSKEELVEQLKMQCQRIHTRVVETTPEEAPSALRSLMTEYGEGSVMTSGDHRFEQYGFYPMFDSLQHEGFAVTSWNAEASREENIRLAEQAAYSVVFSDYTLAESGTIVLSSHQGQGRALHFLPMMYIVCIEKSTVVPRMIQAVSTLNRLVEEGEQAKGAIHFISGPSNSADIEMNLVVGVHGPVRAVYLLIDDE.

It belongs to the LutC/YkgG family.

Functionally, is involved in L-lactate degradation and allows cells to grow with lactate as the sole carbon source. In Bacillus pumilus (strain SAFR-032), this protein is Lactate utilization protein C.